Consider the following 299-residue polypeptide: SET domain-containing protein 9 (299 aa).

Positions 122-295 (FSVAQATSSL…QGEELFSNYY (174 aa)) constitute an SET domain. Tyr294 contacts S-adenosyl-L-methionine.

Belongs to the class V-like SAM-binding methyltransferase superfamily.

The polypeptide is SET domain-containing protein 9 (SETD9) (Homo sapiens (Human)).